We begin with the raw amino-acid sequence, 298 residues long: Adaptation to cold protein C (298 aa).

Interacts with the C-terminal extension of AtcJ. Also interacts with AtcB, but not with AtcA.

Interaction with AtcJ stabilizes AtcC. Involved in cold adaptation. The polypeptide is Adaptation to cold protein C (Shewanella oneidensis (strain ATCC 700550 / JCM 31522 / CIP 106686 / LMG 19005 / NCIMB 14063 / MR-1)).